Consider the following 217-residue polypeptide: MAEISASMVKELRERTGAGMMDCKKALAEVGGDMEKAIEFLREKGLAAAAKKAGRIAAEGVVESYIHGGGRIGVLVEINCETDFVAKNEDFRGLAKDIAMQIAAAKPEFVRREEVSADKIEKEKEILRAQALNEGKPEKIVEKMVEGRIEKFYKEVCLLEQPFIKDSDKTVQQVINEIIAKIGEKVDVRRFVRYEMGEGLEKRQDDFAAEVAAQIKA.

Residues 82–85 (TDFV) are involved in Mg(2+) ion dislocation from EF-Tu.

The protein belongs to the EF-Ts family.

The protein localises to the cytoplasm. Its function is as follows. Associates with the EF-Tu.GDP complex and induces the exchange of GDP to GTP. It remains bound to the aminoacyl-tRNA.EF-Tu.GTP complex up to the GTP hydrolysis stage on the ribosome. The polypeptide is Elongation factor Ts (Desulforamulus reducens (strain ATCC BAA-1160 / DSM 100696 / MI-1) (Desulfotomaculum reducens)).